Reading from the N-terminus, the 334-residue chain is Holliday junction branch migration complex subunit RuvB (334 aa).

The large ATPase domain (RuvB-L) stretch occupies residues 1–182 (MDERLVSSEA…FGVMSRLEYY (182 aa)). Residues Leu-21, Arg-22, Gly-63, Lys-66, Thr-67, Thr-68, 129-131 (EDF), Arg-172, Tyr-182, and Arg-219 contribute to the ATP site. Residue Thr-67 coordinates Mg(2+). The interval 183–253 (TQEELADIVT…ISQNALERLQ (71 aa)) is small ATPAse domain (RuvB-S). Residues 256–334 (RLGLDHIDHK…HFQMEAPRYD (79 aa)) form a head domain (RuvB-H) region. The DNA site is built by Arg-311 and Arg-316.

Belongs to the RuvB family. As to quaternary structure, homohexamer. Forms an RuvA(8)-RuvB(12)-Holliday junction (HJ) complex. HJ DNA is sandwiched between 2 RuvA tetramers; dsDNA enters through RuvA and exits via RuvB. An RuvB hexamer assembles on each DNA strand where it exits the tetramer. Each RuvB hexamer is contacted by two RuvA subunits (via domain III) on 2 adjacent RuvB subunits; this complex drives branch migration. In the full resolvosome a probable DNA-RuvA(4)-RuvB(12)-RuvC(2) complex forms which resolves the HJ. Homohexamer which interacts with RecU.

Its subcellular location is the cytoplasm. The enzyme catalyses ATP + H2O = ADP + phosphate + H(+). In terms of biological role, the RuvA-RuvB-RuvC complex processes Holliday junction (HJ) DNA during genetic recombination and DNA repair, while the RuvA-RuvB complex plays an important role in the rescue of blocked DNA replication forks via replication fork reversal (RFR). RuvA specifically binds to HJ cruciform DNA, conferring on it an open structure. The RuvB hexamer acts as an ATP-dependent pump, pulling dsDNA into and through the RuvAB complex. RuvB forms 2 homohexamers on either side of HJ DNA bound by 1 or 2 RuvA tetramers; 4 subunits per hexamer contact DNA at a time. Coordinated motions by a converter formed by DNA-disengaged RuvB subunits stimulates ATP hydrolysis and nucleotide exchange. Immobilization of the converter enables RuvB to convert the ATP-contained energy into a lever motion, pulling 2 nucleotides of DNA out of the RuvA tetramer per ATP hydrolyzed, thus driving DNA branch migration. The RuvB motors rotate together with the DNA substrate, which together with the progressing nucleotide cycle form the mechanistic basis for DNA recombination by continuous HJ branch migration. Branch migration allows RuvC to scan DNA until it finds its consensus sequence, where it cleaves and resolves cruciform DNA. The sequence is that of Holliday junction branch migration complex subunit RuvB from Bacillus subtilis (strain 168).